A 530-amino-acid chain; its full sequence is Autoinducer-2 kinase (530 aa).

This sequence belongs to the FGGY kinase family.

The protein localises to the cytoplasm. It carries out the reaction (S)-4,5-dihydroxypentane-2,3-dione + ATP = (2S)-2-hydroxy-3,4-dioxopentyl phosphate + ADP + H(+). Its function is as follows. Catalyzes the phosphorylation of autoinducer-2 (AI-2) to phospho-AI-2, which subsequently inactivates the transcriptional regulator LsrR and leads to the transcription of the lsr operon. Phosphorylates the ring-open form of (S)-4,5-dihydroxypentane-2,3-dione (DPD), which is the precursor to all AI-2 signaling molecules, at the C5 position. In Yersinia pestis bv. Antiqua (strain Angola), this protein is Autoinducer-2 kinase.